Here is a 198-residue protein sequence, read N- to C-terminus: Nucleoid occlusion factor SlmA (198 aa).

Residues 9-70 (RNRREEILQA…SLIEFIEDSL (62 aa)) form the HTH tetR-type domain. Residues 33–52 (TTAKLAANVGVSEAALYRHF) constitute a DNA-binding region (H-T-H motif). Residues 119 to 144 (DRLQGRINQLYERIEVQLRQVLRERK) are a coiled coil.

This sequence belongs to the nucleoid occlusion factor SlmA family. Homodimer. Interacts with FtsZ.

Its subcellular location is the cytoplasm. It localises to the nucleoid. Functionally, required for nucleoid occlusion (NO) phenomenon, which prevents Z-ring formation and cell division over the nucleoid. Acts as a DNA-associated cell division inhibitor that binds simultaneously chromosomal DNA and FtsZ, and disrupts the assembly of FtsZ polymers. SlmA-DNA-binding sequences (SBS) are dispersed on non-Ter regions of the chromosome, preventing FtsZ polymerization at these regions. The chain is Nucleoid occlusion factor SlmA from Sodalis glossinidius (strain morsitans).